The following is a 118-amino-acid chain: Beta-2-microglobulin (118 aa).

The first 20 residues, 1-20 (MAPLVALVLLGLLSLSGLDA), serve as a signal peptide directing secretion. The 88-residue stretch at 25-112 (PKVQVYSRHP…HVTLDKPKIV (88 aa)) folds into the Ig-like C1-type domain. Cys45 and Cys99 are joined by a disulfide.

Belongs to the beta-2-microglobulin family. Heterodimer of an alpha chain and a beta chain. Beta-2-microglobulin is the beta-chain of major histocompatibility complex class I molecules.

It is found in the secreted. Functionally, component of the class I major histocompatibility complex (MHC). Involved in the presentation of peptide antigens to the immune system. The polypeptide is Beta-2-microglobulin (B2M) (Sus scrofa (Pig)).